A 388-amino-acid polypeptide reads, in one-letter code: Isocitrate dehydrogenase [NAD] subunit 1, mitochondrial (388 aa).

A mitochondrion-targeting transit peptide spans 1-35; that stretch reads MFSLRTAQPAQSLFRAATNTYSTSLPRSAIAARSF. Positions 137, 168, and 255 each coordinate substrate. Mg(2+) is bound at residue Asp255.

This sequence belongs to the isocitrate and isopropylmalate dehydrogenases family. Octamer of two non-identical subunits IDH1 and IDH2. Mg(2+) is required as a cofactor. Requires Mn(2+) as cofactor.

Its subcellular location is the mitochondrion. It catalyses the reaction D-threo-isocitrate + NAD(+) = 2-oxoglutarate + CO2 + NADH. In terms of biological role, performs an essential role in the oxidative function of the citric acid cycle. The protein is Isocitrate dehydrogenase [NAD] subunit 1, mitochondrial (IDH1) of Ajellomyces capsulatus (Darling's disease fungus).